Reading from the N-terminus, the 101-residue chain is Urease subunit beta (101 aa).

This sequence belongs to the urease beta subunit family. As to quaternary structure, heterotrimer of UreA (gamma), UreB (beta) and UreC (alpha) subunits. Three heterotrimers associate to form the active enzyme.

It is found in the cytoplasm. The catalysed reaction is urea + 2 H2O + H(+) = hydrogencarbonate + 2 NH4(+). Its pathway is nitrogen metabolism; urea degradation; CO(2) and NH(3) from urea (urease route): step 1/1. In Rhodopseudomonas palustris (strain HaA2), this protein is Urease subunit beta.